Here is a 647-residue protein sequence, read N- to C-terminus: Threonine--tRNA ligase (647 aa).

The TGS domain occupies 1–61 (MIKITFPDGA…EEDGSIEIVT (61 aa)). A catalytic region spans residues 240-538 (DHRKLGKELD…LIETYKGAFP (299 aa)). 3 residues coordinate Zn(2+): cysteine 334, histidine 385, and histidine 515.

This sequence belongs to the class-II aminoacyl-tRNA synthetase family. Homodimer. Zn(2+) is required as a cofactor.

The protein resides in the cytoplasm. The enzyme catalyses tRNA(Thr) + L-threonine + ATP = L-threonyl-tRNA(Thr) + AMP + diphosphate + H(+). Its function is as follows. Catalyzes the attachment of threonine to tRNA(Thr) in a two-step reaction: L-threonine is first activated by ATP to form Thr-AMP and then transferred to the acceptor end of tRNA(Thr). Also edits incorrectly charged L-seryl-tRNA(Thr). This is Threonine--tRNA ligase from Streptococcus pyogenes serotype M6 (strain ATCC BAA-946 / MGAS10394).